Consider the following 361-residue polypeptide: Histidinol-phosphate aminotransferase (361 aa).

Residue K219 is modified to N6-(pyridoxal phosphate)lysine.

It belongs to the class-II pyridoxal-phosphate-dependent aminotransferase family. Histidinol-phosphate aminotransferase subfamily. As to quaternary structure, homodimer. Pyridoxal 5'-phosphate serves as cofactor.

It carries out the reaction L-histidinol phosphate + 2-oxoglutarate = 3-(imidazol-4-yl)-2-oxopropyl phosphate + L-glutamate. The protein operates within amino-acid biosynthesis; L-histidine biosynthesis; L-histidine from 5-phospho-alpha-D-ribose 1-diphosphate: step 7/9. This chain is Histidinol-phosphate aminotransferase, found in Acinetobacter baumannii (strain ATCC 17978 / DSM 105126 / CIP 53.77 / LMG 1025 / NCDC KC755 / 5377).